The chain runs to 427 residues: Light-independent protochlorophyllide reductase subunit N (427 aa).

Residues Cys30, Cys55, and Cys116 each coordinate [4Fe-4S] cluster.

Belongs to the BchN/ChlN family. As to quaternary structure, protochlorophyllide reductase is composed of three subunits; BchL, BchN and BchB. Forms a heterotetramer of two BchB and two BchN subunits. [4Fe-4S] cluster is required as a cofactor.

It carries out the reaction chlorophyllide a + oxidized 2[4Fe-4S]-[ferredoxin] + 2 ADP + 2 phosphate = protochlorophyllide a + reduced 2[4Fe-4S]-[ferredoxin] + 2 ATP + 2 H2O. The protein operates within porphyrin-containing compound metabolism; bacteriochlorophyll biosynthesis (light-independent). Component of the dark-operative protochlorophyllide reductase (DPOR) that uses Mg-ATP and reduced ferredoxin to reduce ring D of protochlorophyllide (Pchlide) to form chlorophyllide a (Chlide). This reaction is light-independent. The NB-protein (BchN-BchB) is the catalytic component of the complex. The sequence is that of Light-independent protochlorophyllide reductase subunit N from Rhodopseudomonas palustris (strain BisA53).